The following is a 423-amino-acid chain: Glycine amidinotransferase, mitochondrial (423 aa).

The transit peptide at 1 to 43 directs the protein to the mitochondrion; the sequence is MLRVRCLRGGSRGAEAVHYIGSRLGGSLTGWVQRTFQSTQAAT. Phosphoserine is present on residues serine 46 and serine 49. Position 170 (aspartate 170) interacts with arginine. Residues aspartate 254 and histidine 303 contribute to the active site. Arginine-binding residues include aspartate 305, arginine 322, serine 354, and serine 355. The residue at position 385 (lysine 385) is an N6-acetyllysine. Cysteine 407 (amidino-cysteine intermediate) is an active-site residue.

It belongs to the amidinotransferase family. Homodimer. As to expression, expressed in kidney, brain, gonads, uterus, and embryonic head, chest and abdomen. Maternally expressed in the placenta and yolk sac of embryos.

The protein resides in the mitochondrion inner membrane. The catalysed reaction is L-arginine + glycine = guanidinoacetate + L-ornithine. It catalyses the reaction 4-aminobutanoate + L-arginine = 4-guanidinobutanoate + L-ornithine. The enzyme catalyses beta-alanine + L-arginine = 3-guanidinopropanoate + L-ornithine. It carries out the reaction taurine + L-arginine = taurocyamine + L-ornithine. It participates in amine and polyamine biosynthesis; creatine biosynthesis; creatine from L-arginine and glycine: step 1/2. In terms of biological role, transamidinase that catalyzes the transfer of the amidino group of L-arginine onto the amino moiety of acceptor metabolites such as glycine, beta-alanine, gamma-aminobutyric acid (GABA) and taurine yielding the corresponding guanidine derivatives. Catalyzes the rate-limiting step of creatine biosynthesis, namely the transfer of the amidino group from L-arginine to glycine to generate guanidinoacetate, which is then methylated by GAMT to form creatine. Provides creatine as a source for ATP generation in tissues with high energy demands, in particular skeletal muscle, heart and brain. This is Glycine amidinotransferase, mitochondrial (Gatm) from Mus musculus (Mouse).